Consider the following 182-residue polypeptide: Lipoprotein signal peptidase (182 aa).

The next 4 membrane-spanning stretches (helical) occupy residues 12-32, 40-60, 70-90, and 97-117; these read FLWISALAFILDQWSKYTVID, IQVLPFFNFTYVHNYGAAFSF, WFFTAIAVVVSVVILWWLKQS, and LPVAFAFILGGALGNVYDRLV. Catalysis depends on residues D123 and D141. The helical transmembrane segment at 136–156 threads the bilayer; that stretch reads AFNIADSAIFIGAALLIIDMF. A disordered region spans residues 161 to 182; that stretch reads KKSEENGAESKAGSANSSETIK. Residues 173–182 are compositionally biased toward polar residues; that stretch reads GSANSSETIK.

This sequence belongs to the peptidase A8 family.

The protein resides in the cell inner membrane. The enzyme catalyses Release of signal peptides from bacterial membrane prolipoproteins. Hydrolyzes -Xaa-Yaa-Zaa-|-(S,diacylglyceryl)Cys-, in which Xaa is hydrophobic (preferably Leu), and Yaa (Ala or Ser) and Zaa (Gly or Ala) have small, neutral side chains.. Its pathway is protein modification; lipoprotein biosynthesis (signal peptide cleavage). In terms of biological role, this protein specifically catalyzes the removal of signal peptides from prolipoproteins. This is Lipoprotein signal peptidase from Alteromonas mediterranea (strain DSM 17117 / CIP 110805 / LMG 28347 / Deep ecotype).